A 269-amino-acid polypeptide reads, in one-letter code: Phosphonates import ATP-binding protein PhnC (269 aa).

The ABC transporter domain maps to 2–245 (LVVEGLTCRF…VARELYDLEA (244 aa)). 34–41 (GRSGAGKS) contributes to the ATP binding site.

It belongs to the ABC transporter superfamily. Phosphonates importer (TC 3.A.1.9.1) family. The complex is composed of two ATP-binding proteins (PhnC), two transmembrane proteins (PhnE) and a solute-binding protein (PhnD).

It is found in the cell inner membrane. It carries out the reaction phosphonate(out) + ATP + H2O = phosphonate(in) + ADP + phosphate + H(+). Part of the ABC transporter complex PhnCDE involved in phosphonates import. Responsible for energy coupling to the transport system. In Bradyrhizobium diazoefficiens (strain JCM 10833 / BCRC 13528 / IAM 13628 / NBRC 14792 / USDA 110), this protein is Phosphonates import ATP-binding protein PhnC.